The sequence spans 319 residues: Ribose-phosphate pyrophosphokinase (319 aa).

Residues 40–42 (DGE) and 99–100 (RQ) each bind ATP. Histidine 134 and aspartate 174 together coordinate Mg(2+). Lysine 198 is a catalytic residue. D-ribose 5-phosphate is bound by residues arginine 200, aspartate 224, and 228–232 (DTAGT).

It belongs to the ribose-phosphate pyrophosphokinase family. Class I subfamily. Homohexamer. Mg(2+) serves as cofactor.

The protein resides in the cytoplasm. The catalysed reaction is D-ribose 5-phosphate + ATP = 5-phospho-alpha-D-ribose 1-diphosphate + AMP + H(+). The protein operates within metabolic intermediate biosynthesis; 5-phospho-alpha-D-ribose 1-diphosphate biosynthesis; 5-phospho-alpha-D-ribose 1-diphosphate from D-ribose 5-phosphate (route I): step 1/1. Functionally, involved in the biosynthesis of the central metabolite phospho-alpha-D-ribosyl-1-pyrophosphate (PRPP) via the transfer of pyrophosphoryl group from ATP to 1-hydroxyl of ribose-5-phosphate (Rib-5-P). The sequence is that of Ribose-phosphate pyrophosphokinase from Xanthomonas campestris pv. campestris (strain ATCC 33913 / DSM 3586 / NCPPB 528 / LMG 568 / P 25).